Here is a 101-residue protein sequence, read N- to C-terminus: Small ribosomal subunit protein eS24 (101 aa).

Belongs to the eukaryotic ribosomal protein eS24 family.

The protein is Small ribosomal subunit protein eS24 of Methanosarcina mazei (strain ATCC BAA-159 / DSM 3647 / Goe1 / Go1 / JCM 11833 / OCM 88) (Methanosarcina frisia).